A 383-amino-acid chain; its full sequence is uncharacterized protein (383 aa).

Belongs to the peptidase M20 family.

This is an uncharacterized protein from Staphylococcus epidermidis (strain ATCC 35984 / DSM 28319 / BCRC 17069 / CCUG 31568 / BM 3577 / RP62A).